The sequence spans 255 residues: EEF1A lysine methyltransferase 4 (255 aa).

2 residues coordinate S-adenosyl-L-methionine: W26 and Y30. Position 39 is a phosphotyrosine (Y39). S-adenosyl-L-methionine contacts are provided by residues W41, G66, 88–89 (DY), 113–114 (DV), and K130. The Required for methyltransferase activity motif lies at 129–134 (EKGTLD).

It belongs to the methyltransferase superfamily.

The enzyme catalyses L-lysyl-[protein] + S-adenosyl-L-methionine = N(6)-methyl-L-lysyl-[protein] + S-adenosyl-L-homocysteine + H(+). The catalysed reaction is N(6)-methyl-L-lysyl-[protein] + S-adenosyl-L-methionine = N(6),N(6)-dimethyl-L-lysyl-[protein] + S-adenosyl-L-homocysteine + H(+). It carries out the reaction N(6),N(6)-dimethyl-L-lysyl-[protein] + S-adenosyl-L-methionine = N(6),N(6),N(6)-trimethyl-L-lysyl-[protein] + S-adenosyl-L-homocysteine + H(+). Its function is as follows. Protein-lysine methyltransferase that efficiently catalyzes three successive methylations on 'Lys-36' in eukaryotic translation elongation factor 1 alpha (EEF1A1 or EEF1A2). The protein is EEF1A lysine methyltransferase 4 of Mus musculus (Mouse).